Here is a 375-residue protein sequence, read N- to C-terminus: Probable cytochrome c oxidase subunit 2 (375 aa).

Transmembrane regions (helical) follow at residues 36-56 (LAVS…DNVW), 80-100 (IIAA…TVVF), and 122-142 (LTYT…TVVV). Cu cation is bound by residues His-264, Cys-305, Cys-309, and His-313. The segment covering 353 to 363 (VATSTRPFNTD) has biased composition (polar residues). The disordered stretch occupies residues 353-375 (VATSTRPFNTDRTVKSAAAPEAE).

This sequence belongs to the cytochrome c oxidase subunit 2 family. The cofactor is Cu cation. Heme is required as a cofactor.

Its subcellular location is the cell membrane. The catalysed reaction is 4 Fe(II)-[cytochrome c] + O2 + 8 H(+)(in) = 4 Fe(III)-[cytochrome c] + 2 H2O + 4 H(+)(out). Functionally, subunits I and II form the functional core of the enzyme complex. Electrons originating in cytochrome c are transferred via heme a and Cu(A) to the binuclear center formed by heme a3 and Cu(B). This chain is Probable cytochrome c oxidase subunit 2 (ctaC), found in Nocardia farcinica (strain IFM 10152).